A 1014-amino-acid chain; its full sequence is Beta-galactosidase (1014 aa).

The active-site Proton donor is glutamate 460. The active-site Nucleophile is the glutamate 527.

It belongs to the glycosyl hydrolase 2 family.

The enzyme catalyses Hydrolysis of terminal non-reducing beta-D-galactose residues in beta-D-galactosides.. The protein is Beta-galactosidase (lacZ) of Halalkalibacterium halodurans (strain ATCC BAA-125 / DSM 18197 / FERM 7344 / JCM 9153 / C-125) (Bacillus halodurans).